Consider the following 128-residue polypeptide: Sulfurtransferase TusD (128 aa).

Catalysis depends on cysteine 78, which acts as the Cysteine persulfide intermediate.

The protein belongs to the DsrE/TusD family. Heterohexamer, formed by a dimer of trimers. The hexameric TusBCD complex contains 2 copies each of TusB, TusC and TusD. The TusBCD complex interacts with TusE.

It localises to the cytoplasm. Functionally, part of a sulfur-relay system required for 2-thiolation of 5-methylaminomethyl-2-thiouridine (mnm(5)s(2)U) at tRNA wobble positions. Accepts sulfur from TusA and transfers it in turn to TusE. The chain is Sulfurtransferase TusD from Escherichia coli O7:K1 (strain IAI39 / ExPEC).